We begin with the raw amino-acid sequence, 1809 residues long: Proprotein convertase subtilisin/kexin type 5 (1809 aa).

Residues 1–34 (MDWGWGSRCCRPGRRDLLCVLALLAGCLLPVCRT) form the signal peptide. Residues 35–116 (RVYTNHWAVK…QQVVKKRTKR (82 aa)) constitute a propeptide that is removed on maturation. Residues 117–1700 (DYDLSRAQST…DTVFHEHTKT (1584 aa)) are Extracellular-facing. The region spanning 136–455 (MWYMHCSDNT…FGLMDAEAMV (320 aa)) is the Peptidase S8 domain. Residues aspartate 173 and histidine 214 each act as charge relay system in the active site. Residues asparagine 227 and asparagine 383 are each glycosylated (N-linked (GlcNAc...) asparagine). The active-site Charge relay system is serine 388. The P/Homo B domain maps to 463-603 (TVPQQHVCVE…SLVLYGTSVQ (141 aa)). The Cell attachment site motif lies at 521–523 (RGD). 21 FU repeats span residues 632 to 682 (EDYA…GHFH), 685 to 732 (KKRC…GSYQ), 736 to 779 (KNIC…GQFF), 781 to 826 (GHDC…SYYL), 834 to 881 (YKSC…GEYI), 884 to 929 (QGHC…WKFE), 931 to 964 (KKQCHPCHHTCQGCQGSGPSNCTSCKAGEFQDSE), 965 to 1010 (YGEC…KTFG), 1012 to 1054 (KWEC…GFYG), 1058 to 1099 (LGEC…PTWP), 1137 to 1179 (TRQY…GTWL), 1183 to 1230 (SSSC…GFYA), 1232 to 1276 (DGVC…KHVA), 1278 to 1321 (EGVC…NFYP), 1323 to 1369 (MRQC…GTYK), 1373 to 1418 (NDEC…IEYW), 1422 to 1467 (SHRC…GYHT), 1471 to 1516 (SHQC…GYYG), 1520 to 1567 (SGRC…HYYA), 1571 to 1616 (AQTC…GEYR), and 1622 to 1669 (NFNC…SHPH). Positions 638–1685 (CDPECSEVGC…DCQSSTDECI (1048 aa)) are CRM (Cys-rich motif). Asparagine 667 carries an N-linked (GlcNAc...) asparagine glycan. N-linked (GlcNAc...) asparagine glycosylation is found at asparagine 754, asparagine 804, and asparagine 854. 2 N-linked (GlcNAc...) asparagine glycosylation sites follow: asparagine 1642 and asparagine 1664. The helical transmembrane segment at 1701–1721 (ALLVTSGAMLLLLLGAAVVVW) threads the bilayer. At 1722–1809 (RKSRSQPVAK…EYDDESYSYQ (88 aa)) the chain is on the cytoplasmic side. AC regions lie at residues 1757–1776 (VIEYRDRDYDEDDEDDIVYM) and 1788–1809 (YGLLDEAEDDELEYDDESYSYQ).

This sequence belongs to the peptidase S8 family. In terms of tissue distribution, expressed in the intestine, brain, adrenal gland, anterior pituitary, thyroid, ovaries, testis and lung. Highest levels are found in the gut, duodenum, jejunum and ileum. Expression is higher in female than in male reproductive organs.

The protein localises to the secreted. It localises to the endomembrane system. Its function is as follows. Serine endoprotease that processes various proproteins by cleavage at paired basic amino acids, recognizing the RXXX[KR]R consensus motif. Likely functions in the constitutive and regulated secretory pathways. Plays an essential role in pregnancy establishment by proteolytic activation of a number of important factors such as BMP2, CALD1 and alpha-integrins. May be responsible for the maturation of gastrointestinal peptides. May be involved in the cellular proliferation of adrenal cortex via the activation of growth factors. This Rattus norvegicus (Rat) protein is Proprotein convertase subtilisin/kexin type 5 (Pcsk5).